A 437-amino-acid polypeptide reads, in one-letter code: Glutamate-1-semialdehyde 2,1-aminomutase (437 aa).

K274 is modified (N6-(pyridoxal phosphate)lysine).

The protein belongs to the class-III pyridoxal-phosphate-dependent aminotransferase family. HemL subfamily. Homodimer. It depends on pyridoxal 5'-phosphate as a cofactor.

The protein localises to the cytoplasm. The enzyme catalyses (S)-4-amino-5-oxopentanoate = 5-aminolevulinate. The protein operates within porphyrin-containing compound metabolism; protoporphyrin-IX biosynthesis; 5-aminolevulinate from L-glutamyl-tRNA(Glu): step 2/2. The polypeptide is Glutamate-1-semialdehyde 2,1-aminomutase (Verminephrobacter eiseniae (strain EF01-2)).